The chain runs to 1031 residues: Protein translocase subunit SecA (1031 aa).

ATP contacts are provided by residues Gln143, 161 to 165 (GEGKT), and Asp662. Cys1015, Cys1017, Cys1026, and Cys1027 together coordinate Zn(2+).

This sequence belongs to the SecA family. Monomer and homodimer. Part of the essential Sec protein translocation apparatus which comprises SecA, SecYEG and auxiliary proteins SecDF. Other proteins may also be involved. It depends on Zn(2+) as a cofactor.

It localises to the cell inner membrane. The protein localises to the cytoplasm. The catalysed reaction is ATP + H2O + cellular proteinSide 1 = ADP + phosphate + cellular proteinSide 2.. Its function is as follows. Part of the Sec protein translocase complex. Interacts with the SecYEG preprotein conducting channel. Has a central role in coupling the hydrolysis of ATP to the transfer of proteins into and across the cell membrane, serving as an ATP-driven molecular motor driving the stepwise translocation of polypeptide chains across the membrane. This Chlorobaculum tepidum (strain ATCC 49652 / DSM 12025 / NBRC 103806 / TLS) (Chlorobium tepidum) protein is Protein translocase subunit SecA.